The sequence spans 118 residues: DNA-directed RNA polymerase subunit omega (118 aa).

Belongs to the RNA polymerase subunit omega family. As to quaternary structure, the RNAP catalytic core consists of 2 alpha, 1 beta, 1 beta' and 1 omega subunit. When a sigma factor is associated with the core the holoenzyme is formed, which can initiate transcription.

The enzyme catalyses RNA(n) + a ribonucleoside 5'-triphosphate = RNA(n+1) + diphosphate. Its function is as follows. Promotes RNA polymerase assembly. Latches the N- and C-terminal regions of the beta' subunit thereby facilitating its interaction with the beta and alpha subunits. This chain is DNA-directed RNA polymerase subunit omega, found in Paracoccus denitrificans (strain Pd 1222).